Here is a 467-residue protein sequence, read N- to C-terminus: Nuclear distribution protein nudF (467 aa).

A LisH domain is found at 9–41 (QAEELHKSIIAYLASVNLTESSAALRAELGDSV). The stretch at 60–87 (TSVVRLQKKIMDLESRCAALQSELDSAT) forms a coiled coil. WD repeat units lie at residues 113-154 (GHRN…RTVK), 156-196 (HTKA…KNIR), 200-247 (GHDH…CVKT), 250-289 (GHVDWVRAVAPSIDGRFLLAAGDDRIPRLWDLSSAETKST), 292-352 (GHEH…IKTL), 354-393 (GHDNWVRALAFHPGGKHLLSVADDKTIRCWDLTQECKCVR), 398-428 (AHGHFVTCLRWAPPLIKDGGANGEAETNGTP), and 429-466 (AATSTTNGVRPDPNVATKISIRCVIATGSVDQKVRIFA). The disordered stretch occupies residues 417–439 (GANGEAETNGTPAATSTTNGVRP). Positions 422-436 (AETNGTPAATSTTNG) are enriched in polar residues.

It belongs to the WD repeat LIS1/nudF family. As to quaternary structure, self-associates. Interacts with nudE and dynein.

It is found in the cytoplasm. It localises to the cytoskeleton. The protein localises to the spindle pole. In terms of biological role, positively regulates the activity of the minus-end directed microtubule motor protein dynein. May enhance dynein-mediated microtubule sliding by targeting dynein to the microtubule plus end. Required for nuclear migration during vegetative growth as well as development. Required for retrograde early endosome (EE) transport from the hyphal tip. Required for localization of dynein to the mitotic spindle poles. Recruits additional proteins to the dynein complex at SPBs. In Aspergillus fumigatus (strain CBS 144.89 / FGSC A1163 / CEA10) (Neosartorya fumigata), this protein is Nuclear distribution protein nudF.